Here is a 44-residue protein sequence, read N- to C-terminus: Photosystem II reaction center protein K (44 aa).

Residues 1-7 (MESLLLA) constitute a propeptide that is removed on maturation. Residues 23 to 43 (LPIIPVFFLLLAFVWQAAIGF) traverse the membrane as a helical segment.

It belongs to the PsbK family. PSII is composed of 1 copy each of membrane proteins PsbA, PsbB, PsbC, PsbD, PsbE, PsbF, PsbH, PsbI, PsbJ, PsbK, PsbL, PsbM, PsbT, PsbX, PsbY, PsbZ, Psb30/Ycf12, at least 3 peripheral proteins of the oxygen-evolving complex and a large number of cofactors. It forms dimeric complexes.

It localises to the plastid. Its subcellular location is the chloroplast thylakoid membrane. One of the components of the core complex of photosystem II (PSII). PSII is a light-driven water:plastoquinone oxidoreductase that uses light energy to abstract electrons from H(2)O, generating O(2) and a proton gradient subsequently used for ATP formation. It consists of a core antenna complex that captures photons, and an electron transfer chain that converts photonic excitation into a charge separation. This is Photosystem II reaction center protein K from Trieres chinensis (Marine centric diatom).